A 188-amino-acid chain; its full sequence is Ribosome-recycling factor (188 aa).

This sequence belongs to the RRF family.

It localises to the cytoplasm. Responsible for the release of ribosomes from messenger RNA at the termination of protein biosynthesis. May increase the efficiency of translation by recycling ribosomes from one round of translation to another. The polypeptide is Ribosome-recycling factor (Akkermansia muciniphila (strain ATCC BAA-835 / DSM 22959 / JCM 33894 / BCRC 81048 / CCUG 64013 / CIP 107961 / Muc)).